The chain runs to 835 residues: Outer membrane usher protein FasD (835 aa).

A signal peptide spans 1-21 (MNKYPPLLTMLIIGIGSNAVA). Residues cysteine 810 and cysteine 834 are joined by a disulfide bond.

It belongs to the fimbrial export usher family.

The protein localises to the cell outer membrane. Functionally, involved in the export and assembly of the 987P fimbriae subunits across the outer membrane. In Escherichia coli, this protein is Outer membrane usher protein FasD (fasD).